We begin with the raw amino-acid sequence, 120 residues long: Large ribosomal subunit protein uL18 (120 aa).

The protein belongs to the universal ribosomal protein uL18 family. Part of the 50S ribosomal subunit; part of the 5S rRNA/L5/L18/L25 subcomplex. Contacts the 5S and 23S rRNAs.

This is one of the proteins that bind and probably mediate the attachment of the 5S RNA into the large ribosomal subunit, where it forms part of the central protuberance. This is Large ribosomal subunit protein uL18 from Ehrlichia ruminantium (strain Gardel).